The chain runs to 642 residues: Threonine--tRNA ligase (642 aa).

Positions 1–61 constitute a TGS domain; it reads MPVITLPDGS…ENDAQLSIIT (61 aa). The segment at 243 to 534 is catalytic; sequence DHRKIGKQLD…LTEEFAGFFP (292 aa). Zn(2+) contacts are provided by Cys-334, His-385, and His-511.

This sequence belongs to the class-II aminoacyl-tRNA synthetase family. As to quaternary structure, homodimer. Requires Zn(2+) as cofactor.

The protein localises to the cytoplasm. The enzyme catalyses tRNA(Thr) + L-threonine + ATP = L-threonyl-tRNA(Thr) + AMP + diphosphate + H(+). Catalyzes the attachment of threonine to tRNA(Thr) in a two-step reaction: L-threonine is first activated by ATP to form Thr-AMP and then transferred to the acceptor end of tRNA(Thr). Also edits incorrectly charged L-seryl-tRNA(Thr). The protein is Threonine--tRNA ligase of Enterobacter sp. (strain 638).